We begin with the raw amino-acid sequence, 252 residues long: Phosphoglycolate phosphatase (252 aa).

Catalysis depends on Asp-13, which acts as the Nucleophile. Mg(2+) is bound by residues Asp-13, Asp-15, and Asp-192.

Belongs to the HAD-like hydrolase superfamily. CbbY/CbbZ/Gph/YieH family. In terms of assembly, monomer. The cofactor is Mg(2+). Chloride serves as cofactor.

It carries out the reaction 2-phosphoglycolate + H2O = glycolate + phosphate. The protein operates within organic acid metabolism; glycolate biosynthesis; glycolate from 2-phosphoglycolate: step 1/1. In terms of biological role, specifically catalyzes the dephosphorylation of 2-phosphoglycolate. Is involved in the dissimilation of the intracellular 2-phosphoglycolate formed during the DNA repair of 3'-phosphoglycolate ends, a major class of DNA lesions induced by oxidative stress. In Shigella dysenteriae serotype 1 (strain Sd197), this protein is Phosphoglycolate phosphatase.